The primary structure comprises 301 residues: Diaminopimelate epimerase (301 aa).

Asn15, Gln47, and Asn67 together coordinate substrate. Cys76 (proton donor) is an active-site residue. Substrate-binding positions include Gly77–Asn78, Asn163, Asn197, and Glu215–Arg216. The Proton acceptor role is filled by Cys224. Position 225-226 (Gly225–Ser226) interacts with substrate.

This sequence belongs to the diaminopimelate epimerase family. In terms of assembly, homodimer.

It localises to the cytoplasm. The enzyme catalyses (2S,6S)-2,6-diaminopimelate = meso-2,6-diaminopimelate. The protein operates within amino-acid biosynthesis; L-lysine biosynthesis via DAP pathway; DL-2,6-diaminopimelate from LL-2,6-diaminopimelate: step 1/1. Catalyzes the stereoinversion of LL-2,6-diaminopimelate (L,L-DAP) to meso-diaminopimelate (meso-DAP), a precursor of L-lysine and an essential component of the bacterial peptidoglycan. The chain is Diaminopimelate epimerase from Rhizobium rhizogenes (strain K84 / ATCC BAA-868) (Agrobacterium radiobacter).